Consider the following 250-residue polypeptide: DNA repair protein RecO (250 aa).

Belongs to the RecO family.

Functionally, involved in DNA repair and RecF pathway recombination. In Staphylococcus aureus (strain Mu3 / ATCC 700698), this protein is DNA repair protein RecO.